The primary structure comprises 151 residues: UPF0735 ACT domain-containing protein SH1278 (151 aa).

Residues 74 to 149 form the ACT domain; that stretch reads TLILYVNDIV…HVSKVELISM (76 aa).

The protein belongs to the UPF0735 family.

The sequence is that of UPF0735 ACT domain-containing protein SH1278 from Staphylococcus haemolyticus (strain JCSC1435).